Consider the following 485-residue polypeptide: Tektin-5 (485 aa).

Coiled coils occupy residues 114-185 (RLTD…EVNC), 225-247 (QEQMRKLAQRIDIQMRDNRDAQH), 307-385 (QNMR…MAKE), and 421-444 (TIDDTLQTLKLRLRETQDTLQLLV).

It belongs to the tektin family. Microtubule inner protein component of sperm flagellar doublet microtubules. Interacts with TEKT3. In terms of processing, ubiquitinated, leading to its degradation. Deubiquitinated by USP16, promoting its stability.

The protein resides in the cytoplasm. It is found in the cytoskeleton. It localises to the flagellum axoneme. Sperm-specific microtubule inner protein (MIP) part of the dynein-decorated doublet microtubules (DMTs) in flagellar axoneme. Forms an extensive interaction network in different conformations that reinforces the helix bundle composed by other tektin proteins (TEKT1 to TEKT4) and MIPs to anchor the tektin bundle onto the tubulin wall of A-tubule of the sperm flagellum. This Homo sapiens (Human) protein is Tektin-5 (TEKT5).